We begin with the raw amino-acid sequence, 185 residues long: Ribosome-recycling factor (185 aa).

It belongs to the RRF family.

It localises to the cytoplasm. Its function is as follows. Responsible for the release of ribosomes from messenger RNA at the termination of protein biosynthesis. May increase the efficiency of translation by recycling ribosomes from one round of translation to another. The polypeptide is Ribosome-recycling factor (Roseiflexus castenholzii (strain DSM 13941 / HLO8)).